Reading from the N-terminus, the 100-residue chain is NADH-quinone oxidoreductase subunit K 2 (100 aa).

3 helical membrane passes run 4 to 24, 28 to 48, and 60 to 80; these read LWWF…GVLL, ILVV…NFIA, and IFAI…LGIL.

Belongs to the complex I subunit 4L family. In terms of assembly, NDH-1 is composed of 14 different subunits. Subunits NuoA, H, J, K, L, M, N constitute the membrane sector of the complex.

It is found in the cell inner membrane. It carries out the reaction a quinone + NADH + 5 H(+)(in) = a quinol + NAD(+) + 4 H(+)(out). Its function is as follows. NDH-1 shuttles electrons from NADH, via FMN and iron-sulfur (Fe-S) centers, to quinones in the respiratory chain. The immediate electron acceptor for the enzyme in this species is believed to be ubiquinone. Couples the redox reaction to proton translocation (for every two electrons transferred, four hydrogen ions are translocated across the cytoplasmic membrane), and thus conserves the redox energy in a proton gradient. The protein is NADH-quinone oxidoreductase subunit K 2 of Rhizobium etli (strain CIAT 652).